The sequence spans 328 residues: Beta-ketoacyl-[acyl-carrier-protein] synthase III (328 aa).

Residues cysteine 122 and histidine 255 contribute to the active site. Positions glutamine 256–arginine 260 are ACP-binding. Residue asparagine 285 is part of the active site.

The protein belongs to the thiolase-like superfamily. FabH family. As to quaternary structure, homodimer.

It is found in the cytoplasm. The enzyme catalyses malonyl-[ACP] + acetyl-CoA + H(+) = 3-oxobutanoyl-[ACP] + CO2 + CoA. It functions in the pathway lipid metabolism; fatty acid biosynthesis. In terms of biological role, catalyzes the condensation reaction of fatty acid synthesis by the addition to an acyl acceptor of two carbons from malonyl-ACP. Catalyzes the first condensation reaction which initiates fatty acid synthesis and may therefore play a role in governing the total rate of fatty acid production. Possesses both acetoacetyl-ACP synthase and acetyl transacylase activities. Its substrate specificity determines the biosynthesis of branched-chain and/or straight-chain of fatty acids. The chain is Beta-ketoacyl-[acyl-carrier-protein] synthase III from Polynucleobacter necessarius subsp. necessarius (strain STIR1).